A 511-amino-acid chain; its full sequence is GATOR complex protein NPRL3 (511 aa).

A disordered region spans residues Lys-37–Val-58.

This sequence belongs to the NPR3 family. As to quaternary structure, probably part of the GATOR complex.

The protein localises to the lysosome membrane. Its function is as follows. As a component of the GATOR complex may function in the amino acid-sensing branch of the TORC1 signaling pathway. The sequence is that of GATOR complex protein NPRL3 (nprl-3) from Caenorhabditis elegans.